A 428-amino-acid polypeptide reads, in one-letter code: Enolase (428 aa).

Gln-164 contributes to the (2R)-2-phosphoglycerate binding site. The active-site Proton donor is the Glu-208. Residues Asp-245, Glu-286, and Asp-313 each coordinate Mg(2+). (2R)-2-phosphoglycerate-binding residues include Lys-338, Arg-367, Ser-368, and Lys-389. Catalysis depends on Lys-338, which acts as the Proton acceptor.

Belongs to the enolase family. Mg(2+) serves as cofactor.

The protein localises to the cytoplasm. Its subcellular location is the secreted. It is found in the cell surface. The catalysed reaction is (2R)-2-phosphoglycerate = phosphoenolpyruvate + H2O. The protein operates within carbohydrate degradation; glycolysis; pyruvate from D-glyceraldehyde 3-phosphate: step 4/5. Its function is as follows. Catalyzes the reversible conversion of 2-phosphoglycerate (2-PG) into phosphoenolpyruvate (PEP). It is essential for the degradation of carbohydrates via glycolysis. This chain is Enolase, found in Pyrococcus abyssi (strain GE5 / Orsay).